A 143-amino-acid chain; its full sequence is Large ribosomal subunit protein uL16c (143 aa).

It belongs to the universal ribosomal protein uL16 family. Part of the 50S ribosomal subunit.

The protein resides in the plastid. The protein localises to the chloroplast. This is Large ribosomal subunit protein uL16c from Spirogyra maxima (Green alga).